Reading from the N-terminus, the 580-residue chain is CDKN2A-interacting protein (580 aa).

An N-acetylalanine modification is found at A2. In terms of domain architecture, XRN2-binding (XTBD) spans 19–133 (VEALRCDGET…KVKKRGISSS (115 aa)). The disordered stretch occupies residues 129-356 (GISSSNEGVE…PKSSSSTNTS (228 aa)). S131 bears the Phosphoserine mark. Positions 155–167 (EQDHAKTSAKTER) are enriched in basic and acidic residues. The segment covering 168–179 (ASAQQENSSTCI) has biased composition (polar residues). A Glycyl lysine isopeptide (Lys-Gly) (interchain with G-Cter in SUMO1) cross-link involves residue K184. The segment covering 185–228 (SESGNSARSSGISSQNSSTSDGDRSVSSQSSSSVSSQVTTAGSG) has biased composition (low complexity). Over residues 231–240 (SEAEAPDKHG) the composition is skewed to basic and acidic residues. S241 carries the post-translational modification Phosphoserine. Positions 248–269 (LKSSVNSHMTQSTDSRQQSGSP) are enriched in polar residues. Low complexity-rich tracts occupy residues 274–313 (LEGS…PSSE) and 321–356 (SKTS…TNTS). T346 carries the phosphothreonine modification. S389 is subject to Phosphoserine. The DRBM domain maps to 462–537 (NHGELLNAAI…SREALKLFLK (76 aa)).

It belongs to the CARF family. As to quaternary structure, interacts with CDKN2A/p14ARF, p53/TP53 and MDM2. Interacts with CHEK2 and MAPK3. Interacts with XRN2. In terms of processing, may be ubiquitinated. In terms of tissue distribution, ubiquitously expressed.

It is found in the nucleus. The protein localises to the nucleoplasm. Regulates DNA damage response in a dose-dependent manner through a number of signaling pathways involved in cell proliferation, apoptosis and senescence. The polypeptide is CDKN2A-interacting protein (CDKN2AIP) (Homo sapiens (Human)).